The primary structure comprises 83 residues: MRKSFYSWLMTQRNPKSNAPVAILADLVFDDTTFPKHTNDFELISRYLEDQASFSFNLGQFDEIWEDYLAHQYVDKKESYRLF.

The protein belongs to the UPF0346 family.

The polypeptide is UPF0346 protein M28_Spy0369 (Streptococcus pyogenes serotype M28 (strain MGAS6180)).